We begin with the raw amino-acid sequence, 259 residues long: Cobalt-precorrin-4 C(11)-methyltransferase (259 aa).

Belongs to the precorrin methyltransferase family.

The enzyme catalyses Co-precorrin-4 + S-adenosyl-L-methionine = Co-precorrin-5A + S-adenosyl-L-homocysteine + H(+). Its pathway is cofactor biosynthesis; adenosylcobalamin biosynthesis; cob(II)yrinate a,c-diamide from sirohydrochlorin (anaerobic route): step 4/10. Functionally, catalyzes the methylation of C-11 in cobalt-precorrin-4 to form cobalt-precorrin-5A. The protein is Cobalt-precorrin-4 C(11)-methyltransferase (cbiF) of Methanocaldococcus jannaschii (strain ATCC 43067 / DSM 2661 / JAL-1 / JCM 10045 / NBRC 100440) (Methanococcus jannaschii).